A 790-amino-acid polypeptide reads, in one-letter code: Accumulates dyads protein 3 (790 aa).

Residues 8-122 are disordered; the sequence is LNKPESLKEQ…NTLKSPNKFL (115 aa). Residues 39-49 show a composition bias toward basic and acidic residues; that stretch reads PESKPFRERRS. 2 stretches are compositionally biased toward polar residues: residues 50-78 and 89-108; these read QTWIDSEVPTSTEKSNVQESISSDIISKL and ESWAGSEASSPSGNISTLEN. Coiled-coil stretches lie at residues 241-328, 361-430, 477-498, and 540-658; these read ISKE…REEK, LVSE…RLND, KNLENMEQYKQLKGKIELLEKN, and QQFR…LKKL.

As to quaternary structure, interacts directly with SSP1. Probable component of a SPB complex composed of ADY3, SSP1, DON1, MPC54, SPO21/MPC70, NUD1 and CNM67. In terms of processing, phosphorylated.

It localises to the prospore membrane. The protein localises to the cytoplasm. It is found in the cytoskeleton. The protein resides in the microtubule organizing center. Its subcellular location is the spindle pole body. Functionally, involved in the pathway that organizes the prospore membrane (PSM) during sporulation. Mediates the assembly of the DON1 ring structure at the leading edge of PSM during meiosis II. May constitute a physical link between SSP1-containing PSM precursors and the spindle pole body (SPB) and may facilitate the recruitment of other factors that are required to promote spore wall formation. This is Accumulates dyads protein 3 (ADY3) from Saccharomyces cerevisiae (strain ATCC 204508 / S288c) (Baker's yeast).